The sequence spans 129 residues: Glycine cleavage system H protein (129 aa).

In terms of domain architecture, Lipoyl-binding spans 24–106; that stretch reads LLKIGVSEFA…IGEGWLVILK (83 aa). Residue K65 is modified to N6-lipoyllysine.

This sequence belongs to the GcvH family. In terms of assembly, the glycine cleavage system is composed of four proteins: P, T, L and H. The cofactor is (R)-lipoate.

The glycine cleavage system catalyzes the degradation of glycine. The H protein shuttles the methylamine group of glycine from the P protein to the T protein. The protein is Glycine cleavage system H protein of Prochlorococcus marinus (strain MIT 9215).